Consider the following 128-residue polypeptide: L-ectoine synthase (128 aa).

Belongs to the ectoine synthase family.

It carries out the reaction (2S)-4-acetamido-2-aminobutanoate = L-ectoine + H2O. The protein operates within amine and polyamine biosynthesis; ectoine biosynthesis; L-ectoine from L-aspartate 4-semialdehyde: step 3/3. Its function is as follows. Catalyzes the circularization of gamma-N-acetyl-alpha,gamma-diaminobutyric acid (ADABA) to ectoine (1,4,5,6-tetrahydro-2-methyl-4-pyrimidine carboxylic acid), which is an excellent osmoprotectant. This is L-ectoine synthase from Vibrio parahaemolyticus serotype O3:K6 (strain RIMD 2210633).